We begin with the raw amino-acid sequence, 227 residues long: E3 ubiquitin-protein ligase RNF186 (227 aa).

An RING-type zinc finger spans residues 40–86 (CLVCREPYSCPRLPKLLACQHAFCAICLKLLLCVQDNTWSITCPLCR). The next 2 membrane-spanning stretches (helical) occupy residues 158–178 (HLLL…PGVL) and 180–200 (WVLT…CCLP).

In terms of assembly, interacts with BNIP1. In terms of processing, polyubiquitinated. 'Lys-29'-linked autoubiquitination leads to proteasomal degradation.

It localises to the endoplasmic reticulum membrane. The catalysed reaction is S-ubiquitinyl-[E2 ubiquitin-conjugating enzyme]-L-cysteine + [acceptor protein]-L-lysine = [E2 ubiquitin-conjugating enzyme]-L-cysteine + N(6)-ubiquitinyl-[acceptor protein]-L-lysine.. The protein operates within protein modification; protein ubiquitination. Functionally, E3 ubiquitin protein ligase that is part of an apoptotic signaling pathway activated by endoplasmic reticulum stress. Stimulates the expression of proteins specific of the unfolded protein response (UPR), ubiquitinates BNIP1 and regulates its localization to the mitochondrion and induces calcium release from the endoplasmic reticulum that ultimately leads to cell apoptosis. Plays a role in the maintenance of intestinal homeostasis and clearance of enteric pathogens. Upon NOD2 stimulation, ubiquitinates the ER stress sensor activating transcription factor 6/ATF6 and promotes the unfolded protein response UPR. Participates in basal level of autophagy maintenance by regulating the ubiquitination of EPHB2 and EPHB3. Upon stimulation by ligand EFNB1, ubiquitinates EPHB2 and further recruits MAP1LC3B for autophagy induction. Controls nutrient sensing by ubiquitinating Sestrin-2/SESN2, which is an intracellular sensor of cytosolic leucine and inhibitor of mTORC1 activity. This chain is E3 ubiquitin-protein ligase RNF186, found in Homo sapiens (Human).